Here is a 463-residue protein sequence, read N- to C-terminus: A-type ATP synthase subunit B (463 aa).

The protein belongs to the ATPase alpha/beta chains family. As to quaternary structure, has multiple subunits with at least A(3), B(3), C, D, E, F, H, I and proteolipid K(x).

Its subcellular location is the cell membrane. Functionally, component of the A-type ATP synthase that produces ATP from ADP in the presence of a proton gradient across the membrane. The B chain is a regulatory subunit. This Saccharolobus islandicus (strain Y.N.15.51 / Yellowstone #2) (Sulfolobus islandicus) protein is A-type ATP synthase subunit B.